Reading from the N-terminus, the 377-residue chain is Protein RecA (377 aa).

76–83 (GPESSGKT) lines the ATP pocket. The segment at 346 to 377 (TNGNNGEDHEGTEPVEIEAEDAAPKKGKKGKH) is disordered.

The protein belongs to the RecA family.

The protein resides in the cytoplasm. Functionally, can catalyze the hydrolysis of ATP in the presence of single-stranded DNA, the ATP-dependent uptake of single-stranded DNA by duplex DNA, and the ATP-dependent hybridization of homologous single-stranded DNAs. It interacts with LexA causing its activation and leading to its autocatalytic cleavage. The polypeptide is Protein RecA (Bdellovibrio bacteriovorus (strain ATCC 15356 / DSM 50701 / NCIMB 9529 / HD100)).